We begin with the raw amino-acid sequence, 131 residues long: Small ribosomal subunit protein uS8 (131 aa).

The protein belongs to the universal ribosomal protein uS8 family. In terms of assembly, part of the 30S ribosomal subunit. Contacts proteins S5 and S12.

Its function is as follows. One of the primary rRNA binding proteins, it binds directly to 16S rRNA central domain where it helps coordinate assembly of the platform of the 30S subunit. The sequence is that of Small ribosomal subunit protein uS8 from Dechloromonas aromatica (strain RCB).